The chain runs to 54 residues: Protein hunchback (54 aa).

C2H2-type zinc fingers lie at residues 1 to 3, 9 to 31, and 37 to 54; these read RKH, FQCDKCSYSCVNKSMLNSHRKFH, and YRCADCDYATKYCHSFKL.

Belongs to the hunchback C2H2-type zinc-finger protein family.

It localises to the nucleus. In terms of biological role, gap class segmentation protein that controls development of head structures. The polypeptide is Protein hunchback (hb) (Calliphora vicina (Blue blowfly)).